The following is an 85-amino-acid chain: Cysteine-rich venom protein 1 (85 aa).

The first 21 residues, 1–21, serve as a signal peptide directing secretion; that stretch reads MCRYALIVLVVVVVATNLSEA. Intrachain disulfides connect cysteine 29–cysteine 63, cysteine 38–cysteine 59, cysteine 42–cysteine 53, cysteine 46–cysteine 84, and cysteine 65–cysteine 78. Residues 29 to 84 enclose the TIL domain; the sequence is CEPNRIYKTCGPACPPTCEDPDPDCNETPQCKAGCFCIPGLIENMKGGNCISPSLC.

This sequence belongs to the serine protease inhibitor-like (TIL domain-containing) family. Expressed by the venom gland.

Its subcellular location is the secreted. Functionally, may be a phenoloxidase inhibitor that stabilizes or inhibits venom phenoloxidase while it is stored in the venom sac. In Pimpla hypochondriaca (Parasitoid wasp), this protein is Cysteine-rich venom protein 1.